We begin with the raw amino-acid sequence, 311 residues long: 4-hydroxy-3-methylbut-2-enyl diphosphate reductase (311 aa).

A [4Fe-4S] cluster-binding site is contributed by Cys12. Positions 41 and 74 each coordinate (2E)-4-hydroxy-3-methylbut-2-enyl diphosphate. The dimethylallyl diphosphate site is built by His41 and His74. Residues His41 and His74 each contribute to the isopentenyl diphosphate site. A [4Fe-4S] cluster-binding site is contributed by Cys96. His124 provides a ligand contact to (2E)-4-hydroxy-3-methylbut-2-enyl diphosphate. His124 contacts dimethylallyl diphosphate. His124 serves as a coordination point for isopentenyl diphosphate. The active-site Proton donor is Glu126. Thr168 is a (2E)-4-hydroxy-3-methylbut-2-enyl diphosphate binding site. Cys198 provides a ligand contact to [4Fe-4S] cluster. Residues Ser226, Ser227, Asn228, and Ser270 each coordinate (2E)-4-hydroxy-3-methylbut-2-enyl diphosphate. 4 residues coordinate dimethylallyl diphosphate: Ser226, Ser227, Asn228, and Ser270. Isopentenyl diphosphate contacts are provided by Ser226, Ser227, Asn228, and Ser270.

This sequence belongs to the IspH family. Requires [4Fe-4S] cluster as cofactor.

The enzyme catalyses isopentenyl diphosphate + 2 oxidized [2Fe-2S]-[ferredoxin] + H2O = (2E)-4-hydroxy-3-methylbut-2-enyl diphosphate + 2 reduced [2Fe-2S]-[ferredoxin] + 2 H(+). It catalyses the reaction dimethylallyl diphosphate + 2 oxidized [2Fe-2S]-[ferredoxin] + H2O = (2E)-4-hydroxy-3-methylbut-2-enyl diphosphate + 2 reduced [2Fe-2S]-[ferredoxin] + 2 H(+). It participates in isoprenoid biosynthesis; dimethylallyl diphosphate biosynthesis; dimethylallyl diphosphate from (2E)-4-hydroxy-3-methylbutenyl diphosphate: step 1/1. Its pathway is isoprenoid biosynthesis; isopentenyl diphosphate biosynthesis via DXP pathway; isopentenyl diphosphate from 1-deoxy-D-xylulose 5-phosphate: step 6/6. In terms of biological role, catalyzes the conversion of 1-hydroxy-2-methyl-2-(E)-butenyl 4-diphosphate (HMBPP) into a mixture of isopentenyl diphosphate (IPP) and dimethylallyl diphosphate (DMAPP). Acts in the terminal step of the DOXP/MEP pathway for isoprenoid precursor biosynthesis. This chain is 4-hydroxy-3-methylbut-2-enyl diphosphate reductase, found in Alcanivorax borkumensis (strain ATCC 700651 / DSM 11573 / NCIMB 13689 / SK2).